We begin with the raw amino-acid sequence, 181 residues long: Protein GrpE (181 aa).

Over residues 1 to 10 (MENTQENPAT) the composition is skewed to polar residues. The interval 1–33 (MENTQENPATPSAEDIGSEKQAAQGAAPAAEAA) is disordered. Over residues 21 to 33 (QAAQGAAPAAEAA) the composition is skewed to low complexity.

The protein belongs to the GrpE family. Homodimer.

The protein localises to the cytoplasm. Its function is as follows. Participates actively in the response to hyperosmotic and heat shock by preventing the aggregation of stress-denatured proteins, in association with DnaK and GrpE. It is the nucleotide exchange factor for DnaK and may function as a thermosensor. Unfolded proteins bind initially to DnaJ; upon interaction with the DnaJ-bound protein, DnaK hydrolyzes its bound ATP, resulting in the formation of a stable complex. GrpE releases ADP from DnaK; ATP binding to DnaK triggers the release of the substrate protein, thus completing the reaction cycle. Several rounds of ATP-dependent interactions between DnaJ, DnaK and GrpE are required for fully efficient folding. The chain is Protein GrpE from Burkholderia cenocepacia (strain ATCC BAA-245 / DSM 16553 / LMG 16656 / NCTC 13227 / J2315 / CF5610) (Burkholderia cepacia (strain J2315)).